Reading from the N-terminus, the 280-residue chain is Large ribosomal subunit protein uL2cz/uL2cy (280 aa).

2 disordered regions span residues 1–25 and 231–280; these read MAIHLYKTSTPSTRNGAVDSQVKSN and PVDH…RRTK.

It belongs to the universal ribosomal protein uL2 family. In terms of assembly, part of the 50S ribosomal subunit.

The protein localises to the plastid. It is found in the chloroplast. This is Large ribosomal subunit protein uL2cz/uL2cy (rpl2-A) from Platanus occidentalis (Sycamore).